Reading from the N-terminus, the 1122-residue chain is Adhesin P1 (1122 aa).

A signal peptide spans 1–26 (MKKLIFKLSVGITPLALIGLGSFGLA). 3 disordered regions span residues 182 to 208 (ATGD…GGGA), 244 to 273 (DYNS…GGRT), and 541 to 562 (GALQ…SNGN). Residues 195–208 (AGGGSSSSAAGGGA) show a composition bias toward gly residues. Positions 259–273 (LDSSESSESINGGRT) are enriched in polar residues. Residues 1001–1021 (AISIPIIIIALALALGLGIGI) traverse the membrane as a helical segment. Residues 1066 to 1122 (KTPQMLQANKKDGASSPSKPSAPAAKKPAGPTKPSAPGAKPTAPAKPKAPAPTKKIE) are disordered. The span at 1079–1122 (ASSPSKPSAPAAKKPAGPTKPSAPGAKPTAPAKPKAPAPTKKIE) shows a compositional bias: low complexity.

It belongs to the adhesin P1 family.

The protein resides in the cell membrane. Could be involved in cytadherence. This is Adhesin P1 (gapA) from Mycoplasmoides gallisepticum (strain R(low / passage 15 / clone 2)) (Mycoplasma gallisepticum).